Here is a 408-residue protein sequence, read N- to C-terminus: UPF0496 protein At5g66670 (408 aa).

Transmembrane regions (helical) follow at residues valine 239–methionine 259 and proline 262–cysteine 282.

This sequence belongs to the UPF0496 family.

The protein resides in the membrane. The protein is UPF0496 protein At5g66670 of Arabidopsis thaliana (Mouse-ear cress).